A 161-amino-acid chain; its full sequence is Photosystem I reaction center subunit XI (161 aa).

2 consecutive transmembrane segments (helical) span residues 84–104 (LIST…YGLV) and 126–146 (FTGG…FLLE).

Belongs to the PsaL family.

Its subcellular location is the cellular thylakoid membrane. The sequence is that of Photosystem I reaction center subunit XI from Trichodesmium erythraeum (strain IMS101).